The primary structure comprises 842 residues: MDIRKAYLDFFASKRHEITPSSPLVPDDATLLFTNAGMVPFKSIFTGEIPRPNPPRKTSCQTCIRAGGKHNDLDNVGYTARHHTFFEMLGNFSFGDYFKEQAIAYAWEFVTEVLKLPKDRLYITVHENDDEAFNLWQKHIQKERIYKFGDKDNFWQMGDTGPCGPCSEIFYDQGQEHFNSSEDYMGGDGDRFLEIWNLVFMQYERSANGVLSPLPKPSIDTGMGLERVTAIKEGKFSNFDSSLFMPIINEISKLCNKTYVYESGASFRVIADHIRSSVFLLAQGVSFDKEGRGYVLRRILRRALRHGYLLGFKQAFMYKLVDIVCDLMGGHYTYLNEKKDSIKEQIRFEEERFLSTIENGIEIFNEELKNTKEIFSGEVAFKLYDTYGFPLDLTADMLREKNLKVDEEKFELLMNEQKARAKASWKGSGDKTVSGDFKNLLEKFGENHFVGYEKAECESKILALLDEDFKEVSTLKDAGWVMLENTPFYATSGGQSADSGFIAKREVLDTQKFFNLNLSFIKAGEELKVGTIAHARIDAEKREQIARHHSATHLLHHALREILGSHVSQAGSLVESNKLRFDFTHHKALSKEELESIEKRVNEMIINSSEAILENMPLEEAKKSGAIALFNEKYQGNVRVLTLGESKELCGGTHVKNTAQIGSFYIVKESGVSAGVRRIEAVVSKAALEFVKNQLEGLSKAKDELKNNDILSGVKKLKNEILSLKNELKNSSKTELDSKNIQGVEICVKRVDNGDIKAMIDDFKNKFAKAVILLIQVKDEKITLAAGVKDAPLKAGALVKEAAQILGGNGGGRDDFATAGGKDLSKIDEALKQSLETIEKAL.

His549, His553, Cys650, and His654 together coordinate Zn(2+).

Belongs to the class-II aminoacyl-tRNA synthetase family. It depends on Zn(2+) as a cofactor.

It is found in the cytoplasm. It carries out the reaction tRNA(Ala) + L-alanine + ATP = L-alanyl-tRNA(Ala) + AMP + diphosphate. In terms of biological role, catalyzes the attachment of alanine to tRNA(Ala) in a two-step reaction: alanine is first activated by ATP to form Ala-AMP and then transferred to the acceptor end of tRNA(Ala). Also edits incorrectly charged Ser-tRNA(Ala) and Gly-tRNA(Ala) via its editing domain. This is Alanine--tRNA ligase from Campylobacter jejuni subsp. doylei (strain ATCC BAA-1458 / RM4099 / 269.97).